Reading from the N-terminus, the 77-residue chain is Translation initiation factor IF-1, chloroplastic (77 aa).

The 71-residue stretch at methionine 1 to arginine 71 folds into the S1-like domain.

Belongs to the IF-1 family. As to quaternary structure, component of the 30S ribosomal translation pre-initiation complex which assembles on the 30S ribosome in the order IF-2 and IF-3, IF-1 and N-formylmethionyl-tRNA(fMet); mRNA recruitment can occur at any time during PIC assembly.

The protein resides in the plastid. It is found in the chloroplast. Its function is as follows. One of the essential components for the initiation of protein synthesis. Stabilizes the binding of IF-2 and IF-3 on the 30S subunit to which N-formylmethionyl-tRNA(fMet) subsequently binds. Helps modulate mRNA selection, yielding the 30S pre-initiation complex (PIC). Upon addition of the 50S ribosomal subunit IF-1, IF-2 and IF-3 are released leaving the mature 70S translation initiation complex. This Hedera helix (English ivy) protein is Translation initiation factor IF-1, chloroplastic.